We begin with the raw amino-acid sequence, 1081 residues long: Isoleucine--tRNA ligase (1081 aa).

The 'HIGH' region signature appears at 53 to 63 (PFATGLPHYGN). Positions 607–611 (KMSKS) match the 'KMSKS' region motif. Lys-610 lines the ATP pocket.

This sequence belongs to the class-I aminoacyl-tRNA synthetase family.

The enzyme catalyses tRNA(Ile) + L-isoleucine + ATP = L-isoleucyl-tRNA(Ile) + AMP + diphosphate. In Tetrahymena thermophila, this protein is Isoleucine--tRNA ligase (ILSA).